We begin with the raw amino-acid sequence, 408 residues long: Putative transporter AmpG 2 (408 aa).

12 consecutive transmembrane segments (helical) span residues 10–30 (YISN…IYLL), 49–69 (IGLF…GPLL), 84–104 (YCLI…TNFN), 109–129 (FIPF…YDML), 154–174 (FRIG…IISW), 177–197 (VYRS…IYPL), 224–244 (WLII…LSIM), 261–281 (LGYK…GGFL), 294–311 (ALIY…LYFY), 315–337 (ITSL…SPFF), 353–373 (IALI…ISGY), and 378–398 (LGWT…YILI).

Belongs to the major facilitator superfamily.

It localises to the cell inner membrane. This chain is Putative transporter AmpG 2 (ampG2), found in Rickettsia felis (strain ATCC VR-1525 / URRWXCal2) (Rickettsia azadi).